The following is a 305-amino-acid chain: Plant-type L-asparaginase (305 aa).

Thr-175 (nucleophile) is an active-site residue. Substrate-binding positions include Arg-202 to Asp-205 and Thr-224 to Gly-227.

It belongs to the Ntn-hydrolase family. In terms of assembly, heterotetramer of two alpha and two beta chains arranged as a dimer of alpha/beta heterodimers. In terms of processing, autocleaved. Generates the alpha and beta subunits. The N-terminal residue of the beta subunit is thought to be responsible for the nucleophile hydrolase activity.

It carries out the reaction L-asparagine + H2O = L-aspartate + NH4(+). Functionally, catalyzes the hydrolysis of L-asparagine into L-aspartate and ammonia. The protein is Plant-type L-asparaginase of Pyrococcus horikoshii (strain ATCC 700860 / DSM 12428 / JCM 9974 / NBRC 100139 / OT-3).